Consider the following 188-residue polypeptide: MKVAASSLRKGFVVDMDGKLYVVLNVENIHPGKGTPVTQLNMRRISDGVKVSERYRTTETVERAFVDQRDHTFLYQDGEGYHFMNPESFDQLVASPEVIGDLGAYLAEGMVVQLSTHNDLPIALELPRTVTLEIVETEPSVKGQTASSSYKPAILSNGVRTMVPPYIAAGTRVIILTEDGSYQERAKD.

Belongs to the elongation factor P family.

It localises to the cytoplasm. The protein operates within protein biosynthesis; polypeptide chain elongation. Functionally, involved in peptide bond synthesis. Stimulates efficient translation and peptide-bond synthesis on native or reconstituted 70S ribosomes in vitro. Probably functions indirectly by altering the affinity of the ribosome for aminoacyl-tRNA, thus increasing their reactivity as acceptors for peptidyl transferase. The sequence is that of Elongation factor P from Caulobacter sp. (strain K31).